The chain runs to 341 residues: Vacuolar morphogenesis protein 7 homolog (341 aa).

The 115-residue stretch at 1–115 (MALKIKIPET…KFLNIKDESE (115 aa)) folds into the PX domain. Over residues 214-233 (NSPVAPPSASSQLNSSNPSS) the composition is skewed to low complexity. The disordered stretch occupies residues 214-265 (NSPVAPPSASSQLNSSNPSSPFRPLSASTDKQSNTSLNRVLGKNRMPETQTT). Positions 239–251 (SASTDKQSNTSLN) are enriched in polar residues. The t-SNARE coiled-coil homology domain maps to 278–340 (NQTMEDQDMQ…HRTRAGLRKL (63 aa)).

As to quaternary structure, possibly multimeric.

The protein resides in the vacuole. Functionally, essential for proper morphogenesis of the vacuole. May exist as structural reinforcement on the surface of the vacuolar membrane and be required for maintenance against rupture by osmotic pressure. The sequence is that of Vacuolar morphogenesis protein 7 homolog from Schizosaccharomyces pombe (strain 972 / ATCC 24843) (Fission yeast).